Consider the following 265-residue polypeptide: Cell division protein FtsQ (265 aa).

Low complexity predominate over residues M1–R13. The segment at M1–K25 is disordered. The Cytoplasmic segment spans residues M1 to R35. A compositionally biased stretch (pro residues) spans T14–A23. The helical transmembrane segment at R36–G58 threads the bilayer. Topologically, residues S59–S265 are extracellular. The 70-residue stretch at L62–R131 folds into the POTRA domain.

Belongs to the FtsQ/DivIB family. FtsQ subfamily.

It localises to the cell membrane. In terms of biological role, essential cell division protein. In Streptomyces bingchenggensis (strain BCW-1), this protein is Cell division protein FtsQ.